The following is a 362-amino-acid chain: Aminomethyltransferase (362 aa).

It belongs to the GcvT family. The glycine cleavage system is composed of four proteins: P, T, L and H.

The enzyme catalyses N(6)-[(R)-S(8)-aminomethyldihydrolipoyl]-L-lysyl-[protein] + (6S)-5,6,7,8-tetrahydrofolate = N(6)-[(R)-dihydrolipoyl]-L-lysyl-[protein] + (6R)-5,10-methylene-5,6,7,8-tetrahydrofolate + NH4(+). In terms of biological role, the glycine cleavage system catalyzes the degradation of glycine. The sequence is that of Aminomethyltransferase from Pseudothermotoga lettingae (strain ATCC BAA-301 / DSM 14385 / NBRC 107922 / TMO) (Thermotoga lettingae).